We begin with the raw amino-acid sequence, 389 residues long: Probable serine/threonine-protein kinase PBL24 (389 aa).

The segment at 1–36 (MSCFLGPSTNNKSRENEGSSMAAPYEQQNLPRNDRR) is disordered. Residue Cys-3 is the site of S-palmitoyl cysteine attachment. Positions 71–348 (FRQEFLIGEG…SDVVTALSFM (278 aa)) constitute a Protein kinase domain. ATP contacts are provided by residues 77–85 (IGEGGFGRV) and Lys-100. Asp-198 serves as the catalytic Proton acceptor. A phosphoserine mark is found at Ser-202 and Ser-232. Phosphothreonine is present on Thr-238. Tyr-246 is modified (phosphotyrosine).

It belongs to the protein kinase superfamily. Ser/Thr protein kinase family.

It is found in the cell membrane. It carries out the reaction L-seryl-[protein] + ATP = O-phospho-L-seryl-[protein] + ADP + H(+). The catalysed reaction is L-threonyl-[protein] + ATP = O-phospho-L-threonyl-[protein] + ADP + H(+). Functionally, may be involved in plant defense signaling. The sequence is that of Probable serine/threonine-protein kinase PBL24 from Arabidopsis thaliana (Mouse-ear cress).